Consider the following 79-residue polypeptide: Sec-independent protein translocase protein TatA (79 aa).

A helical membrane pass occupies residues M1–F21. Positions E54–S79 are disordered. Basic and acidic residues predominate over residues K66–S79.

The protein belongs to the TatA/E family. In terms of assembly, the Tat system comprises two distinct complexes: a TatABC complex, containing multiple copies of TatA, TatB and TatC subunits, and a separate TatA complex, containing only TatA subunits. Substrates initially bind to the TatABC complex, which probably triggers association of the separate TatA complex to form the active translocon.

The protein localises to the cell inner membrane. Part of the twin-arginine translocation (Tat) system that transports large folded proteins containing a characteristic twin-arginine motif in their signal peptide across membranes. TatA could form the protein-conducting channel of the Tat system. This chain is Sec-independent protein translocase protein TatA, found in Helicobacter pylori (strain J99 / ATCC 700824) (Campylobacter pylori J99).